Here is a 453-residue protein sequence, read N- to C-terminus: Tubulin gamma chain (453 aa).

142 to 148 is a GTP binding site; sequence AGGTGSG.

Belongs to the tubulin family.

The protein localises to the cytoplasm. It is found in the cytoskeleton. Its subcellular location is the microtubule organizing center. It localises to the spindle pole body. Functionally, tubulin is the major constituent of microtubules. The gamma chain is found at microtubule organizing centers (MTOC) such as the spindle poles or the centrosome, suggesting that it is involved in the minus-end nucleation of microtubule assembly. This Coprinopsis cinerea (strain Okayama-7 / 130 / ATCC MYA-4618 / FGSC 9003) (Inky cap fungus) protein is Tubulin gamma chain (TUB4).